The primary structure comprises 72 residues: ATP synthase subunit c (72 aa).

2 consecutive transmembrane segments (helical) span residues 5 to 25 and 51 to 71; these read LLAAGIAVLAGIGAGIGIGIA and AGLSEATAIYGLVVSIILLFV.

The protein belongs to the ATPase C chain family. F-type ATPases have 2 components, F(1) - the catalytic core - and F(0) - the membrane proton channel. F(1) has five subunits: alpha(3), beta(3), gamma(1), delta(1), epsilon(1). F(0) has three main subunits: a(1), b(2) and c(10-14). The alpha and beta chains form an alternating ring which encloses part of the gamma chain. F(1) is attached to F(0) by a central stalk formed by the gamma and epsilon chains, while a peripheral stalk is formed by the delta and b chains.

It localises to the cell membrane. In terms of biological role, f(1)F(0) ATP synthase produces ATP from ADP in the presence of a proton or sodium gradient. F-type ATPases consist of two structural domains, F(1) containing the extramembraneous catalytic core and F(0) containing the membrane proton channel, linked together by a central stalk and a peripheral stalk. During catalysis, ATP synthesis in the catalytic domain of F(1) is coupled via a rotary mechanism of the central stalk subunits to proton translocation. Key component of the F(0) channel; it plays a direct role in translocation across the membrane. A homomeric c-ring of between 10-14 subunits forms the central stalk rotor element with the F(1) delta and epsilon subunits. This is ATP synthase subunit c from Clostridium perfringens (strain ATCC 13124 / DSM 756 / JCM 1290 / NCIMB 6125 / NCTC 8237 / Type A).